The sequence spans 541 residues: Phosphoenolpyruvate carboxykinase (ATP) (541 aa).

Substrate-binding residues include Arg-67, Tyr-207, and Lys-213. Residues Lys-213, His-232, and 248-256 (GLSGTGKTT) each bind ATP. Residues Lys-213 and His-232 each coordinate Mn(2+). Asp-269 is a Mn(2+) binding site. Residues Glu-297, Arg-333, 449–450 (RI), and Thr-455 contribute to the ATP site. Arg-333 contributes to the substrate binding site.

It belongs to the phosphoenolpyruvate carboxykinase (ATP) family. In terms of assembly, monomer. The cofactor is Mn(2+).

The protein resides in the cytoplasm. The enzyme catalyses oxaloacetate + ATP = phosphoenolpyruvate + ADP + CO2. It functions in the pathway carbohydrate biosynthesis; gluconeogenesis. Involved in the gluconeogenesis. Catalyzes the conversion of oxaloacetate (OAA) to phosphoenolpyruvate (PEP) through direct phosphoryl transfer between the nucleoside triphosphate and OAA. The polypeptide is Phosphoenolpyruvate carboxykinase (ATP) (Vibrio atlanticus (strain LGP32) (Vibrio splendidus (strain Mel32))).